Reading from the N-terminus, the 123-residue chain is Insulin-like peptide-1 (123 aa).

A signal peptide spans 1–24; the sequence is MTTSSYFLLVALGLLLYVCQSSFG. 4 disulfide bridges follow: Cys29/Cys106, Cys41/Cys109, Cys53/Cys122, and Cys108/Cys113. The residue at position 34 (Pro34) is a 4-hydroxyproline; partial. A propeptide spans 59-102 (c peptide); sequence EQGGANNARAYTGRTSSLMKRRGFLSLLKKRGKRDEGSLQRSGR. Residue Glu107 is modified to 4-carboxyglutamate. Residue Glu117 is modified to 4-carboxyglutamate; partial.

It belongs to the insulin family. As to quaternary structure, heterodimer of A and B chains; disulfide-linked. As to expression, expressed by the venom duct.

The protein resides in the secreted. Its function is as follows. This venom insulin facilitates prey capture by rapidly inducing hypoglycemic shock. Intraperitoneal injection of this peptide into zebrafish lowers blood glucose with the same potency than human insulin. In vivo, when applied to water, this peptide reduces overall locomotor activity of zebrafish larvae, observed as a significant decrease in the percentage of time spent swimming and movement frequency. In Conus victoriae (Queen Victoria cone), this protein is Insulin-like peptide-1.